A 254-amino-acid chain; its full sequence is MTFLAIDVGNTRLKWAMYDAPKPGAAVLAHGAEFLDHIERLADSAWAGLPAPTRMLGCVVAGDAVRRRVMEQMEWWDVPSHWVVPSAEEAGLVNGYDHPTRLGSDRWVAMIGARHRLLRQGPARPLVVVMVGTAVTVEAIDAEGRFLGGLILPGHGIMLRALESGTAGLHVPTGEVKLFPTNTSDALTSGGTYAIAGAVERMVQHVIQHCGEEPACMMTGGAGWKMAPSMTRPFDLIENLIFEGLLAIAAERFR.

Residue 7–14 (DVGNTRLK) participates in ATP binding. Residues Tyr96 and 103 to 106 (GSDR) each bind substrate. The active-site Proton acceptor is the Asp105. Thr133 provides a ligand contact to ATP. Thr183 is a binding site for substrate.

It belongs to the type III pantothenate kinase family. As to quaternary structure, homodimer. NH4(+) serves as cofactor. It depends on K(+) as a cofactor.

It is found in the cytoplasm. It carries out the reaction (R)-pantothenate + ATP = (R)-4'-phosphopantothenate + ADP + H(+). It participates in cofactor biosynthesis; coenzyme A biosynthesis; CoA from (R)-pantothenate: step 1/5. Functionally, catalyzes the phosphorylation of pantothenate (Pan), the first step in CoA biosynthesis. The protein is Type III pantothenate kinase of Paracidovorax citrulli (strain AAC00-1) (Acidovorax citrulli).